The primary structure comprises 233 residues: Phosphoribosylformylglycinamidine synthase subunit PurQ (233 aa).

In terms of domain architecture, Glutamine amidotransferase type-1 spans 9 to 233 (RIGIVTFPGS…LSGFLSAFSS (225 aa)). Cys-92 acts as the Nucleophile in catalysis. Residues His-201 and Glu-203 contribute to the active site.

In terms of assembly, part of the FGAM synthase complex composed of 1 PurL, 1 PurQ and 2 PurS subunits.

It localises to the cytoplasm. The enzyme catalyses N(2)-formyl-N(1)-(5-phospho-beta-D-ribosyl)glycinamide + L-glutamine + ATP + H2O = 2-formamido-N(1)-(5-O-phospho-beta-D-ribosyl)acetamidine + L-glutamate + ADP + phosphate + H(+). It catalyses the reaction L-glutamine + H2O = L-glutamate + NH4(+). The protein operates within purine metabolism; IMP biosynthesis via de novo pathway; 5-amino-1-(5-phospho-D-ribosyl)imidazole from N(2)-formyl-N(1)-(5-phospho-D-ribosyl)glycinamide: step 1/2. Functionally, part of the phosphoribosylformylglycinamidine synthase complex involved in the purines biosynthetic pathway. Catalyzes the ATP-dependent conversion of formylglycinamide ribonucleotide (FGAR) and glutamine to yield formylglycinamidine ribonucleotide (FGAM) and glutamate. The FGAM synthase complex is composed of three subunits. PurQ produces an ammonia molecule by converting glutamine to glutamate. PurL transfers the ammonia molecule to FGAR to form FGAM in an ATP-dependent manner. PurS interacts with PurQ and PurL and is thought to assist in the transfer of the ammonia molecule from PurQ to PurL. This chain is Phosphoribosylformylglycinamidine synthase subunit PurQ, found in Frankia casuarinae (strain DSM 45818 / CECT 9043 / HFP020203 / CcI3).